The sequence spans 636 residues: Probable Xaa-Pro aminopeptidase P (636 aa).

Residues Asp-414, Asp-425, Glu-523, and Glu-537 each contribute to the Mn(2+) site.

Belongs to the peptidase M24B family. Mn(2+) serves as cofactor.

The catalysed reaction is Release of any N-terminal amino acid, including proline, that is linked to proline, even from a dipeptide or tripeptide.. Its function is as follows. Catalyzes the removal of a penultimate prolyl residue from the N-termini of peptides. The polypeptide is Probable Xaa-Pro aminopeptidase P (AMPP) (Ajellomyces capsulatus (strain H143) (Darling's disease fungus)).